A 382-amino-acid polypeptide reads, in one-letter code: ATP phosphoribosyltransferase regulatory subunit (382 aa).

The protein belongs to the class-II aminoacyl-tRNA synthetase family. HisZ subfamily. As to quaternary structure, heteromultimer composed of HisG and HisZ subunits.

The protein localises to the cytoplasm. It functions in the pathway amino-acid biosynthesis; L-histidine biosynthesis; L-histidine from 5-phospho-alpha-D-ribose 1-diphosphate: step 1/9. In terms of biological role, required for the first step of histidine biosynthesis. May allow the feedback regulation of ATP phosphoribosyltransferase activity by histidine. This Burkholderia cenocepacia (strain ATCC BAA-245 / DSM 16553 / LMG 16656 / NCTC 13227 / J2315 / CF5610) (Burkholderia cepacia (strain J2315)) protein is ATP phosphoribosyltransferase regulatory subunit.